The primary structure comprises 673 residues: Elongation factor G 1 (673 aa).

One can recognise a tr-type G domain in the interval K3–L277. GTP-binding positions include A12 to T19, D76 to H80, and N130 to D133.

This sequence belongs to the TRAFAC class translation factor GTPase superfamily. Classic translation factor GTPase family. EF-G/EF-2 subfamily.

The protein resides in the cytoplasm. Catalyzes the GTP-dependent ribosomal translocation step during translation elongation. During this step, the ribosome changes from the pre-translocational (PRE) to the post-translocational (POST) state as the newly formed A-site-bound peptidyl-tRNA and P-site-bound deacylated tRNA move to the P and E sites, respectively. Catalyzes the coordinated movement of the two tRNA molecules, the mRNA and conformational changes in the ribosome. The protein is Elongation factor G 1 of Syntrophomonas wolfei subsp. wolfei (strain DSM 2245B / Goettingen).